We begin with the raw amino-acid sequence, 431 residues long: POU domain, class 2, transcription factor 3 (431 aa).

Disordered stretches follow at residues 1–39, 130–180, and 248–267; these read MVNL…RNGL, LLPQ…EPTD, and DAES…YPTL. Residues 176–250 form the POU-specific domain; the sequence is DEPTDLEELE…LLEKWLNDAE (75 aa). Low complexity predominate over residues 251-267; sequence SSPSDPSASTPSSYPTL. The homeobox DNA-binding region spans 274–333; sequence KRKKRTSIETNIRLTLEKRFQDNPKPSSEEISMIAEQLSMEKEVVRVWFCNRRQKEKRIN. Low complexity-rich tracts occupy residues 352–364, 374–390, and 398–419; these read PSGS…VPPV, SSCS…PGSG, and ASQN…NSSG. Residues 352–419 form a disordered region; the sequence is PSGSLGPLSV…SSSSSFNSSG (68 aa).

Belongs to the POU transcription factor family. Class-2 subfamily. As to quaternary structure, interacts (via the POU domain) with POU2AF1 and POU2AF2 in a DNA-dependent manner; this interaction recruits POU2AF2 to chromatin and increases POU2F3 transactivation activity. Skin, thymus, stomach and testis.

It is found in the nucleus. In terms of biological role, transcription factor that binds to the octamer motif (5'-ATTTGCAT-3'). Regulates cell type-specific differentiation pathways. Involved in the regulation of keratinocytes differentiation. The POU2F3-POU2AF2/POU2AF3 complex drives the expression of tuft-cell-specific genes, a rare chemosensory cells that coordinate immune and neural functions within mucosal epithelial tissues. In Mus musculus (Mouse), this protein is POU domain, class 2, transcription factor 3 (Pou2f3).